Reading from the N-terminus, the 601-residue chain is NADH-quinone oxidoreductase subunit C/D (601 aa).

The NADH dehydrogenase I subunit C stretch occupies residues 1–191 (MKLTRDFPSN…DPFMLDAAKQ (191 aa)). Positions 215–601 (DYMFLNLGPN…IDFVMSDVDR (387 aa)) are NADH dehydrogenase I subunit D.

In the N-terminal section; belongs to the complex I 30 kDa subunit family. This sequence in the C-terminal section; belongs to the complex I 49 kDa subunit family. NDH-1 is composed of 13 different subunits. Subunits NuoB, CD, E, F, and G constitute the peripheral sector of the complex.

It localises to the cell inner membrane. It catalyses the reaction a quinone + NADH + 5 H(+)(in) = a quinol + NAD(+) + 4 H(+)(out). Functionally, NDH-1 shuttles electrons from NADH, via FMN and iron-sulfur (Fe-S) centers, to quinones in the respiratory chain. The immediate electron acceptor for the enzyme in this species is believed to be ubiquinone. Couples the redox reaction to proton translocation (for every two electrons transferred, four hydrogen ions are translocated across the cytoplasmic membrane), and thus conserves the redox energy in a proton gradient. The polypeptide is NADH-quinone oxidoreductase subunit C/D (Aeromonas salmonicida (strain A449)).